Here is a 194-residue protein sequence, read N- to C-terminus: Histone H1.0 (194 aa).

N-acetylmethionine is present on methionine 1. The segment covering 1-11 has biased composition (low complexity); that stretch reads MTENSTSAPAA. The tract at residues 1–29 is disordered; sequence MTENSTSAPAAKPKRAKASKKSTDHPKYS. The residue at position 2 (threonine 2) is an N-acetylthreonine; partial; in Histone H1.0, N-terminally processed. Asparagine 4 is modified (deamidated asparagine; partial). One can recognise an H15 domain in the interval 24–97; that stretch reads DHPKYSDMIV…GASGSFRLAK (74 aa). Arginine 42 is modified (citrulline). Positions 84–194 are disordered; sequence TKGVGASGSF…SSAKRAGKKK (111 aa). Position 104 is an ADP-ribosylserine (serine 104). A compositionally biased stretch (basic residues) spans 105 to 194; that stretch reads VAFKKTKKEI…SSAKRAGKKK (90 aa).

The protein belongs to the histone H1/H5 family. Post-translationally, phosphorylated on Ser-17 in RNA edited version. In terms of processing, ADP-ribosylated on Ser-104 in response to DNA damage.

The protein localises to the nucleus. It is found in the chromosome. Histones H1 are necessary for the condensation of nucleosome chains into higher-order structures. The histones H1.0 are found in cells that are in terminal stages of differentiation or that have low rates of cell division. In Homo sapiens (Human), this protein is Histone H1.0.